Reading from the N-terminus, the 228-residue chain is Transcription termination/antitermination protein NusG (228 aa).

Belongs to the NusG family.

In terms of biological role, participates in transcription elongation, termination and antitermination. In Mycobacterium leprae (strain TN), this protein is Transcription termination/antitermination protein NusG.